We begin with the raw amino-acid sequence, 702 residues long: Arginine decarboxylase 1, chloroplastic (702 aa).

A chloroplast-targeting transit peptide spans 1-52 (MPALAFVDTPIDTFSSIFTPSSVSTAVVDGSCHWSPSLSSSLYRIDGWGAPY). Residue Lys136 is modified to N6-(pyridoxal phosphate)lysine. Pyridoxal 5'-phosphate contacts are provided by residues Ser288, Gly325, and 374–377 (ESGR). 320–330 (IDIGGGLGIDY) provides a ligand contact to substrate. 436 to 437 (YV) serves as a coordination point for substrate. The active-site Proton donor; shared with dimeric partner is the Cys524. Asp525 lines the substrate pocket. Residue Tyr565 participates in pyridoxal 5'-phosphate binding.

It belongs to the Orn/Lys/Arg decarboxylase class-II family. SpeA subfamily. Homodimer. Only the dimer is catalytically active, as the active sites are constructed of residues from both monomers. May form a head-to-tail homodimer. Homodimer and heterodimer with ADC2. Requires pyridoxal 5'-phosphate as cofactor. Mg(2+) is required as a cofactor.

It is found in the plastid. The protein localises to the chloroplast. It localises to the cytoplasm. Its subcellular location is the cytosol. It carries out the reaction L-arginine + H(+) = agmatine + CO2. The protein operates within amine and polyamine biosynthesis; agmatine biosynthesis; agmatine from L-arginine: step 1/1. Required for the biosynthesis of putrescine. Catalyzes the first step of polyamine (PA) biosynthesis to produce putrescine from arginine. Is a minor contributor to basal arginine decarboxylase (ADC) activity and putrescine biosynthesis. Accumulation of putrescine plays a positive role in freezing tolerance. Production of polyamines is essential for normal seed development. Controls PA homeostasis which is crucial for normal plant growth and development. In Arabidopsis thaliana (Mouse-ear cress), this protein is Arginine decarboxylase 1, chloroplastic.